The primary structure comprises 172 residues: Adenine phosphoribosyltransferase (172 aa).

This sequence belongs to the purine/pyrimidine phosphoribosyltransferase family. In terms of assembly, homodimer.

The protein localises to the cytoplasm. It catalyses the reaction AMP + diphosphate = 5-phospho-alpha-D-ribose 1-diphosphate + adenine. It functions in the pathway purine metabolism; AMP biosynthesis via salvage pathway; AMP from adenine: step 1/1. Its function is as follows. Catalyzes a salvage reaction resulting in the formation of AMP, that is energically less costly than de novo synthesis. The protein is Adenine phosphoribosyltransferase of Clostridium tetani (strain Massachusetts / E88).